Here is an 81-residue protein sequence, read N- to C-terminus: MSDQFSNAQHQLDALGLRCPEPVMMVRKSVRRMDDGETLLIIADDPATTRDIPSFCEFMDHTLIASQTDATPYQYLIRKGL.

Catalysis depends on cysteine 19, which acts as the Cysteine persulfide intermediate.

Belongs to the sulfur carrier protein TusA family.

The protein resides in the cytoplasm. Its function is as follows. Sulfur carrier protein which probably makes part of a sulfur-relay system. This Shewanella piezotolerans (strain WP3 / JCM 13877) protein is Sulfur carrier protein TusA.